A 401-amino-acid polypeptide reads, in one-letter code: uncharacterized protein (401 aa).

It belongs to the serpin family.

In terms of biological role, may act as an inhibitor for a host chymotrypsin-like protease. This is an uncharacterized protein from Acanthamoeba polyphaga mimivirus (APMV).